The sequence spans 221 residues: uncharacterized protein (221 aa).

It is found in the mitochondrion. This is an uncharacterized protein from Paramecium tetraurelia.